The primary structure comprises 751 residues: MFKKTVPLLSAVAIAISFSAGTGVANAQENASYEVNSPEPKSNDFWWPNKLNLEPLRQHSPESDPYGDDFDYAEAFSQLDLEQVKKDIEELMTSDQDWWPADYGHYGPFFIRMAWHGAGTYRVQDGRGGAAGAQQRFEPLNSWPDNVSLDKARRLLWPVKQKYGRDISWADLMVLTGNVALESMGFETFGFAGGREDAWEPDIVYWGPEKEWLKGDERYSGDRELENPLAAVQMGLIYVNPEGPNGKPDPLLAAKDIRDTFGRMAMNDEETVALIAGGHTFGKAHGAHKPEECLGAEPAAAGVEEQGLGWKNKCGKGNAEDTITSGLEGAWSVNPTAWTTQYLDNLFGFEWEQTKSPAGAIQWIPVDGQASNLVPDAHVEGKRHAPIMFTTDLSLKEDPEYRKIAKRFHEDPKEFELAFAKAWFKLTHRDMGPKQSYLGDMAPQEDLLWQDPIPAVDFELINENDVEQLKVAILDSGLSVPQLVRTAWASASSFRGTDMRGGANGARIALEPQMNWEANNPAELKKVLDTLKGVQEDFNDELSGDKYVSLADVIVLGGAAAIEKAGKDAGYDVTVPFEPGRTDASQEMTDVNSFSFLEPKADAFRNYYAEGNRVSPAQHMVDKADQLTLTVPEMTVLVGGLRSLDANYNDSDHGVFTDQPGTLNNDFFVNLLSMDNEWKKSSDNEAIYEGFDRKTGEQKYTATTVDLIFGSNSELRAVAEVYAMSDADEKFVNDFVQAWTKVMQLDRFDLK.

The signal sequence occupies residues 1 to 27 (MFKKTVPLLSAVAIAISFSAGTGVANA). The tryptophyl-tyrosyl-methioninium (Trp-Tyr) (with M-264) cross-link spans 115 to 238 (WHGAGTYRVQ…LAAVQMGLIY (124 aa)). His116 serves as the catalytic Proton acceptor. Positions 238-264 (YVNPEGPNGKPDPLLAAKDIRDTFGRM) form a cross-link, tryptophyl-tyrosyl-methioninium (Tyr-Met) (with W-115). Residue His279 participates in heme b binding.

Belongs to the peroxidase family. Peroxidase/catalase subfamily. Homodimer or homotetramer. Heme b is required as a cofactor. In terms of processing, formation of the three residue Trp-Tyr-Met cross-link is important for the catalase, but not the peroxidase activity of the enzyme.

It catalyses the reaction H2O2 + AH2 = A + 2 H2O. It carries out the reaction 2 H2O2 = O2 + 2 H2O. Bifunctional enzyme with both catalase and broad-spectrum peroxidase activity. The polypeptide is Catalase-peroxidase 2 (Idiomarina loihiensis (strain ATCC BAA-735 / DSM 15497 / L2-TR)).